A 211-amino-acid chain; its full sequence is ATP phosphoribosyltransferase (211 aa).

It belongs to the ATP phosphoribosyltransferase family. Short subfamily. Heteromultimer composed of HisG and HisZ subunits.

The protein localises to the cytoplasm. The catalysed reaction is 1-(5-phospho-beta-D-ribosyl)-ATP + diphosphate = 5-phospho-alpha-D-ribose 1-diphosphate + ATP. Its pathway is amino-acid biosynthesis; L-histidine biosynthesis; L-histidine from 5-phospho-alpha-D-ribose 1-diphosphate: step 1/9. Its function is as follows. Catalyzes the condensation of ATP and 5-phosphoribose 1-diphosphate to form N'-(5'-phosphoribosyl)-ATP (PR-ATP). Has a crucial role in the pathway because the rate of histidine biosynthesis seems to be controlled primarily by regulation of HisG enzymatic activity. This Pseudomonas fluorescens (strain ATCC BAA-477 / NRRL B-23932 / Pf-5) protein is ATP phosphoribosyltransferase.